The sequence spans 477 residues: Trigger factor (477 aa).

The PPIase FKBP-type domain occupies 163-248 (ENLVIFDYKA…ITEVKKSEEV (86 aa)). Residues 408-461 (KAKPSKKEISKEEAEKILKEHQKQDHNHEHDHNHDHDHPEEKKASKSTKIEKKP) show a composition bias toward basic and acidic residues. Residues 408 to 477 (KAKPSKKEIS…KPSTKKVSKK (70 aa)) form a disordered region.

It belongs to the FKBP-type PPIase family. Tig subfamily.

The protein localises to the cytoplasm. The enzyme catalyses [protein]-peptidylproline (omega=180) = [protein]-peptidylproline (omega=0). Involved in protein export. Acts as a chaperone by maintaining the newly synthesized protein in an open conformation. Functions as a peptidyl-prolyl cis-trans isomerase. The sequence is that of Trigger factor from Pelagibacter ubique (strain HTCC1062).